Consider the following 420-residue polypeptide: Na(+)/H(+) antiporter NhaA (420 aa).

10 helical membrane passes run 34–54, 69–89, 107–127, 141–161, 168–190, 194–213, 271–291, 301–321, 342–362, and 374–394; these read TTGG…ANLG, LTIE…IAGL, LVPI…YTLF, IPMA…GAGL, FLLT…FFST, IWWL…MQHF, WSAG…HVSG, PISL…ITLG, IIAV…MTDL, and AKAS…AMLH.

Belongs to the NhaA Na(+)/H(+) (TC 2.A.33) antiporter family.

The protein resides in the cell membrane. The enzyme catalyses Na(+)(in) + 2 H(+)(out) = Na(+)(out) + 2 H(+)(in). Its function is as follows. Na(+)/H(+) antiporter that extrudes sodium in exchange for external protons. The polypeptide is Na(+)/H(+) antiporter NhaA (Cutibacterium acnes (strain DSM 16379 / KPA171202) (Propionibacterium acnes)).